We begin with the raw amino-acid sequence, 152 residues long: SsrA-binding protein (152 aa).

The protein belongs to the SmpB family.

It is found in the cytoplasm. Required for rescue of stalled ribosomes mediated by trans-translation. Binds to transfer-messenger RNA (tmRNA), required for stable association of tmRNA with ribosomes. tmRNA and SmpB together mimic tRNA shape, replacing the anticodon stem-loop with SmpB. tmRNA is encoded by the ssrA gene; the 2 termini fold to resemble tRNA(Ala) and it encodes a 'tag peptide', a short internal open reading frame. During trans-translation Ala-aminoacylated tmRNA acts like a tRNA, entering the A-site of stalled ribosomes, displacing the stalled mRNA. The ribosome then switches to translate the ORF on the tmRNA; the nascent peptide is terminated with the 'tag peptide' encoded by the tmRNA and targeted for degradation. The ribosome is freed to recommence translation, which seems to be the essential function of trans-translation. In Rickettsia typhi (strain ATCC VR-144 / Wilmington), this protein is SsrA-binding protein.